A 386-amino-acid chain; its full sequence is Oxysterol-binding protein-related protein 4A (386 aa).

This sequence belongs to the OSBP family. As to expression, expressed in roots, stems and flowers.

Functionally, may be involved in the transport of sterols. This Arabidopsis thaliana (Mouse-ear cress) protein is Oxysterol-binding protein-related protein 4A (ORP4A).